We begin with the raw amino-acid sequence, 364 residues long: Cobalt-precorrin-5B C(1)-methyltransferase (364 aa).

It belongs to the CbiD family.

The catalysed reaction is Co-precorrin-5B + S-adenosyl-L-methionine = Co-precorrin-6A + S-adenosyl-L-homocysteine. It functions in the pathway cofactor biosynthesis; adenosylcobalamin biosynthesis; cob(II)yrinate a,c-diamide from sirohydrochlorin (anaerobic route): step 6/10. Functionally, catalyzes the methylation of C-1 in cobalt-precorrin-5B to form cobalt-precorrin-6A. This chain is Cobalt-precorrin-5B C(1)-methyltransferase, found in Pseudomonas putida (strain ATCC 47054 / DSM 6125 / CFBP 8728 / NCIMB 11950 / KT2440).